A 260-amino-acid polypeptide reads, in one-letter code: Small ribosomal subunit protein uS2 (260 aa).

Residues 224–260 (GRQGQDAGEDSAEKTFADTADGEGDFEESSNNENQEA) are disordered. Positions 243–260 (ADGEGDFEESSNNENQEA) are enriched in acidic residues.

Belongs to the universal ribosomal protein uS2 family.

The chain is Small ribosomal subunit protein uS2 from Oenococcus oeni (strain ATCC BAA-331 / PSU-1).